A 152-amino-acid chain; its full sequence is UPF0260 protein BR1477/BS1330_I1471 (152 aa).

It belongs to the UPF0260 family.

The polypeptide is UPF0260 protein BR1477/BS1330_I1471 (Brucella suis biovar 1 (strain 1330)).